Reading from the N-terminus, the 266-residue chain is 3-methyl-2-oxobutanoate hydroxymethyltransferase 2 (266 aa).

Aspartate 45 and aspartate 84 together coordinate Mg(2+). 3-methyl-2-oxobutanoate contacts are provided by residues 45–46, aspartate 84, and lysine 112; that span reads DS. Glutamate 114 serves as a coordination point for Mg(2+). Catalysis depends on glutamate 181, which acts as the Proton acceptor.

Belongs to the PanB family. Homodecamer; pentamer of dimers. Mg(2+) serves as cofactor.

The protein resides in the cytoplasm. The enzyme catalyses 3-methyl-2-oxobutanoate + (6R)-5,10-methylene-5,6,7,8-tetrahydrofolate + H2O = 2-dehydropantoate + (6S)-5,6,7,8-tetrahydrofolate. It functions in the pathway cofactor biosynthesis; (R)-pantothenate biosynthesis; (R)-pantoate from 3-methyl-2-oxobutanoate: step 1/2. Catalyzes the reversible reaction in which hydroxymethyl group from 5,10-methylenetetrahydrofolate is transferred onto alpha-ketoisovalerate to form ketopantoate. This chain is 3-methyl-2-oxobutanoate hydroxymethyltransferase 2, found in Pseudomonas aeruginosa (strain ATCC 15692 / DSM 22644 / CIP 104116 / JCM 14847 / LMG 12228 / 1C / PRS 101 / PAO1).